A 570-amino-acid chain; its full sequence is L-ascorbate oxidase (570 aa).

The signal sequence occupies residues 1–18 (MGMWWIVAVAILAHTASA). 2 consecutive Plastocyanin-like domains span residues 33-140 (WPDC…IIDV) and 154-317 (FNLL…LNYV). Disulfide bonds link C36–C219, C98–C557, and C197–C211. Cu cation-binding residues include H77 and H79. Residue N109 is glycosylated (N-linked (GlcNAc...) asparagine). The Cu cation site is built by H121 and H123. N196 is a glycosylation site (N-linked (GlcNAc...) asparagine). N-linked (GlcNAc...) asparagine glycosylation is found at N229, N343, N384, N407, N434, N442, and N458. The 118-residue stretch at 426–543 (RNRNAKQGNV…MGMGVVFAEG (118 aa)) folds into the Plastocyanin-like 3 domain. 8 residues coordinate Cu cation: H463, H466, H468, H525, C526, H527, H531, and M536.

The protein belongs to the multicopper oxidase family. As to quaternary structure, dimer. It depends on Cu cation as a cofactor.

It localises to the secreted. It catalyses the reaction 4 L-ascorbate + O2 = 4 monodehydro-L-ascorbate radical + 2 H2O. It functions in the pathway cofactor degradation; L-ascorbate degradation. In terms of biological role, ascorbate oxidase involved in a redox system involving ascorbic acid (AsA). The oxidation of AsA represses responses to high salinity and oxidative stress conditions such as vegetative growth and seed production reductions. Negative regulator of defense responses toward incompatible Turnip mosaic virus (TuMV strain UK1) by preventing jasmonic acid (JA)- dependent accumulation of ascorbic acid (AsA, AS) and dehydroascobic acid (DHA). This chain is L-ascorbate oxidase, found in Brassica rapa subsp. pekinensis (Chinese cabbage).